We begin with the raw amino-acid sequence, 714 residues long: EtfAB:quinone oxidoreductase (714 aa).

6 helical membrane-spanning segments follow: residues 25-45, 87-107, 125-145, 164-184, 207-227, and 236-256; these read YEWL…FGFW, AGWM…AAGI, IGFS…VMVL, DGWI…IEGL, PFGW…MLMW, and MAIA…HIFA. 2 consecutive 4Fe-4S ferredoxin-type domains span residues 293-324 and 375-405; these read WKDL…LNPK and YDVV…HIPK. [4Fe-4S] cluster-binding residues include Cys-302, Cys-305, Cys-308, Cys-312, Cys-386, Cys-389, Cys-392, and Cys-396.

As to quaternary structure, might constitute a membrane-associated complex with EtfA (Swol_0697), EtfB (Swol_0696), and the butyryl-CoA dehydrogenase Swol_1933 and/or Swol_2052. [4Fe-4S] cluster serves as cofactor.

The protein localises to the cell membrane. It participates in lipid metabolism; butanoate metabolism. Its function is as follows. Oxidoreductase involved in syntrophic growth of S.wolfei with butyrate. Is presumed to link the electron flow from butyryl-CoA dehydrogenases to the membrane, in conjunction with the electron transfer flavoprotein EtfAB. May transfer electrons to the menaquinone pool of the membrane. The protein is EtfAB:quinone oxidoreductase of Syntrophomonas wolfei subsp. wolfei (strain DSM 2245B / Goettingen).